A 336-amino-acid chain; its full sequence is MSLKLGVIGTGAIGRDHIRRCSQTLLNSQVVAVTDINLEQAAKVVADLKLDAEVYPDGHALINSPQVEAVLVTSWGPSHEEFVLAAIAAGKPVFCEKPLAVTAEGCRRIVDAEVAYGKRLVQVGFMRPYDEGYRALKAVIDSGQIGEPLMLHCAHRNPTVGENYKTDMAITDTLIHELDVLRWLLNDDYVSVQVVFPRKSSKALAHLRDPQIVLLETAKGTRIDVEVFVNCQYGYDIQCEVVGETGIAKLPEPSQVQLRSGAKLSNAILMDWKDRFIGAYDVELQAFIDSVRAGQVGGPSAWDGFAAAVAADACIEAQGSEQIVKMSLPDRPRFYG.

This sequence belongs to the Gfo/Idh/MocA family. As to quaternary structure, homotetramer.

It carries out the reaction myo-inositol + NAD(+) = scyllo-inosose + NADH + H(+). Involved in the oxidation of myo-inositol (MI) to 2-keto-myo-inositol (2KMI or 2-inosose). In Pseudomonas fluorescens (strain SBW25), this protein is Inositol 2-dehydrogenase.